The primary structure comprises 238 residues: Orotidine 5'-phosphate decarboxylase (238 aa).

Substrate-binding positions include Asp-10, Lys-32, Asp-59–Thr-68, Thr-122, Arg-184, Gln-193, Gly-213, and Arg-214. Lys-61 (proton donor) is an active-site residue.

The protein belongs to the OMP decarboxylase family. Type 1 subfamily. Homodimer.

It catalyses the reaction orotidine 5'-phosphate + H(+) = UMP + CO2. It participates in pyrimidine metabolism; UMP biosynthesis via de novo pathway; UMP from orotate: step 2/2. Functionally, catalyzes the decarboxylation of orotidine 5'-monophosphate (OMP) to uridine 5'-monophosphate (UMP). This chain is Orotidine 5'-phosphate decarboxylase, found in Bacillus cereus (strain AH820).